Reading from the N-terminus, the 480-residue chain is Adenylosuccinate lyase (480 aa).

5 residues coordinate AMP: Arg14, Tyr15, Arg79, His80, and Asp81. Residue His80 coordinates fumarate. His153 (proton donor/acceptor) is an active-site residue. Gln236 is a binding site for AMP. Gln236 lines the fumarate pocket. Gln236 provides a ligand contact to N(6)-(1,2-dicarboxyethyl)-AMP. Catalysis depends on Ser284, which acts as the Proton donor/acceptor. Fumarate is bound by residues Ser285, Lys290, and Asn292. The N(6)-(1,2-dicarboxyethyl)-AMP site is built by Ser285, Lys290, and Asn292. Arg298 lines the AMP pocket. The N(6)-(1,2-dicarboxyethyl)-AMP site is built by Arg324, Ser329, and Arg333. Residues Ser329 and Arg333 each contribute to the AMP site.

It belongs to the lyase 1 family. Adenylosuccinate lyase subfamily. As to quaternary structure, homotetramer.

It carries out the reaction N(6)-(1,2-dicarboxyethyl)-AMP = fumarate + AMP. Its pathway is purine metabolism; AMP biosynthesis via salvage pathway. Its function is as follows. Catalyzes conversion of succinyladenosine monophosphate (SAMP) to AMP and fumarate on the purine salvage pathway. The protein is Adenylosuccinate lyase of Schistosoma mansoni (Blood fluke).